Here is a 129-residue protein sequence, read N- to C-terminus: Histone H3 (129 aa).

The interval 1–36 (MSRTKETARAKRTITSKKSKKAPSGASGVKRSHRRW) is disordered. The span at 10–21 (AKRTITSKKSKK) shows a compositional bias: basic residues.

Belongs to the histone H3 family. In terms of assembly, the nucleosome is a histone octamer containing two molecules each of H2A, H2B, H3 and H4 assembled in one H3-H4 heterotetramer and two H2A-H2B heterodimers. The octamer wraps approximately 147 bp of DNA.

It is found in the nucleus. The protein resides in the chromosome. Functionally, core component of nucleosome. Nucleosomes wrap and compact DNA into chromatin, limiting DNA accessibility to the cellular machineries which require DNA as a template. Histones thereby play a central role in transcription regulation, DNA repair, DNA replication and chromosomal stability. DNA accessibility is regulated via a complex set of post-translational modifications of histones, also called histone code, and nucleosome remodeling. The sequence is that of Histone H3 from Leishmania infantum.